We begin with the raw amino-acid sequence, 307 residues long: Coproporphyrin III ferrochelatase (307 aa).

Fe-coproporphyrin III is bound by residues tyrosine 12, arginine 29, 45-46, serine 53, and tyrosine 124; that span reads RY. Fe(2+) contacts are provided by histidine 181 and glutamate 263.

This sequence belongs to the ferrochelatase family.

It is found in the cytoplasm. The enzyme catalyses Fe-coproporphyrin III + 2 H(+) = coproporphyrin III + Fe(2+). It participates in porphyrin-containing compound metabolism; protoheme biosynthesis. Its function is as follows. Involved in coproporphyrin-dependent heme b biosynthesis. Catalyzes the insertion of ferrous iron into coproporphyrin III to form Fe-coproporphyrin III. The polypeptide is Coproporphyrin III ferrochelatase (Staphylococcus saprophyticus subsp. saprophyticus (strain ATCC 15305 / DSM 20229 / NCIMB 8711 / NCTC 7292 / S-41)).